Here is a 346-residue protein sequence, read N- to C-terminus: F(420)H(2) dehydrogenase subunit F (346 aa).

4Fe-4S ferredoxin-type domains follow at residues 5–34 and 46–76; these read IAEV…VKKA and YEKG…ENEL. [4Fe-4S] cluster contacts are provided by cysteine 14, cysteine 17, cysteine 20, cysteine 24, cysteine 55, cysteine 58, cysteine 61, and cysteine 65.

As to quaternary structure, the FPO complex is composed of at least 13 different subunits. Requires [4Fe-4S] cluster as cofactor. It depends on FAD as a cofactor.

Its subcellular location is the membrane. The protein localises to the cytoplasm. It carries out the reaction methanophenazine + reduced coenzyme F420-(gamma-L-Glu)(n) = dihydromethanophenazine + oxidized coenzyme F420-(gamma-L-Glu)(n) + H(+). The enzyme catalyses reduced coenzyme F420-(gamma-L-Glu)(n) + 2 oxidized [2Fe-2S]-[ferredoxin] = oxidized coenzyme F420-(gamma-L-Glu)(n) + 2 reduced [2Fe-2S]-[ferredoxin] + 3 H(+). Functionally, component of the F(420)H(2) dehydrogenase (FPO complex) which is part of the energy-conserving F(420)H(2):heterodisulfide oxidoreductase system. The membrane-bound electron transfer system of the complex plays an important role in the metabolism of methylotrophic methanogens when the organisms grow on methanol or methylamines. Catalyzes the oxidation of methanophenazine to dihydromethanophenazine. It shuttles electrons from F(420)H(2), via FAD and iron-sulfur (Fe-S) centers, to methanophenazine (an electron carrier in the membrane). It couples the redox reaction to proton translocation (for every two electrons transferred, two hydrogen ions are translocated across the cytoplasmic membrane), and thus conserves the redox energy in a proton gradient. It also catalyzes the oxidation of F(420)H(2) with quinones such as 2,3-dimethyl-1,4-naphthoquinone, 2-methyl-1,4-naphthoquinone and tetramethyl-p-benzoquinone. Might have a dual function, acting as an electron input module when connected to the membrane integral Fpo complex, or as a soluble single subunit, being involved in the reoxydation of reduced ferredoxin in the cytoplasm. The polypeptide is F(420)H(2) dehydrogenase subunit F (fpoF) (Methanosarcina mazei (strain ATCC BAA-159 / DSM 3647 / Goe1 / Go1 / JCM 11833 / OCM 88) (Methanosarcina frisia)).